A 147-amino-acid chain; its full sequence is Hemoglobin subunit epsilon-4 (147 aa).

A Globin domain is found at 3–147; the sequence is HFTTEEKAAV…VANALAHKYH (145 aa). Heme b contacts are provided by His-64 and His-93.

It belongs to the globin family. As to expression, red blood cells.

Functionally, hemoglobin epsilon chain is a beta-type chain found in early embryos. In Bos taurus (Bovine), this protein is Hemoglobin subunit epsilon-4 (HBE4).